The chain runs to 300 residues: UDP-N-acetylenolpyruvoylglucosamine reductase (300 aa).

Residues 27 to 192 (KVGGPADYLA…ISAKFALKPG (166 aa)) enclose the FAD-binding PCMH-type domain. The active site involves arginine 171. The active-site Proton donor is the serine 221. The active site involves glutamate 291.

The protein belongs to the MurB family. It depends on FAD as a cofactor.

The protein localises to the cytoplasm. It catalyses the reaction UDP-N-acetyl-alpha-D-muramate + NADP(+) = UDP-N-acetyl-3-O-(1-carboxyvinyl)-alpha-D-glucosamine + NADPH + H(+). Its pathway is cell wall biogenesis; peptidoglycan biosynthesis. In terms of biological role, cell wall formation. In Streptococcus agalactiae serotype Ia (strain ATCC 27591 / A909 / CDC SS700), this protein is UDP-N-acetylenolpyruvoylglucosamine reductase.